The sequence spans 550 residues: CTP synthase (550 aa).

The tract at residues 1–270 (MTKFVFVTGG…DRLICEELRL (270 aa)) is amidoligase domain. Ser-13 serves as a coordination point for CTP. Position 13 (Ser-13) interacts with UTP. Residues 14 to 19 (SLGKGI) and Asp-71 contribute to the ATP site. Residues Asp-71 and Glu-144 each coordinate Mg(2+). Residues 151-153 (DIE), 191-196 (KTKPTQ), and Lys-227 contribute to the CTP site. Residues 191-196 (KTKPTQ) and Lys-227 contribute to the UTP site. One can recognise a Glutamine amidotransferase type-1 domain in the interval 295 to 547 (TIGMVGKYVD…VEAALASQQR (253 aa)). Residue Gly-356 participates in L-glutamine binding. The Nucleophile; for glutamine hydrolysis role is filled by Cys-383. Residues 384–387 (LGMQ), Glu-407, and Arg-473 contribute to the L-glutamine site. Residues His-520 and Glu-522 contribute to the active site.

It belongs to the CTP synthase family. In terms of assembly, homotetramer.

It carries out the reaction UTP + L-glutamine + ATP + H2O = CTP + L-glutamate + ADP + phosphate + 2 H(+). The catalysed reaction is L-glutamine + H2O = L-glutamate + NH4(+). The enzyme catalyses UTP + NH4(+) + ATP = CTP + ADP + phosphate + 2 H(+). The protein operates within pyrimidine metabolism; CTP biosynthesis via de novo pathway; CTP from UDP: step 2/2. Its activity is regulated as follows. Allosterically activated by GTP, when glutamine is the substrate; GTP has no effect on the reaction when ammonia is the substrate. The allosteric effector GTP functions by stabilizing the protein conformation that binds the tetrahedral intermediate(s) formed during glutamine hydrolysis. Inhibited by the product CTP, via allosteric rather than competitive inhibition. Catalyzes the ATP-dependent amination of UTP to CTP with either L-glutamine or ammonia as the source of nitrogen. Regulates intracellular CTP levels through interactions with the four ribonucleotide triphosphates. This is CTP synthase from Cupriavidus necator (strain ATCC 17699 / DSM 428 / KCTC 22496 / NCIMB 10442 / H16 / Stanier 337) (Ralstonia eutropha).